A 228-amino-acid polypeptide reads, in one-letter code: Translin (228 aa).

The segment at 86-90 is DNA/RNA binding; sequence RFHEH. The tract at residues 177–198 is leucine-zipper; it reads LDSGFRLLNLKNDSLRKRYDGL. K187 bears the N6-acetyllysine mark. Phosphoserine is present on S190. At K199 the chain carries N6-acetyllysine.

This sequence belongs to the translin family. In terms of assembly, ring-shaped heterooctamer of six TSN and two TSNAX subunits, DNA/RNA binding occurs inside the ring.

It is found in the cytoplasm. The protein resides in the nucleus. Functionally, DNA-binding protein that specifically recognizes consensus sequences at the breakpoint junctions in chromosomal translocations, mostly involving immunoglobulin (Ig)/T-cell receptor gene segments. Seems to recognize single-stranded DNA ends generated by staggered breaks occurring at recombination hot spots. In terms of biological role, exhibits both single-stranded and double-stranded endoribonuclease activity. May act as an activator of RNA-induced silencing complex (RISC) by facilitating endonucleolytic cleavage of the siRNA passenger strand. The sequence is that of Translin (Tsn) from Mus musculus (Mouse).